The primary structure comprises 201 residues: UPF0301 protein BP0319 (201 aa).

This sequence belongs to the UPF0301 (AlgH) family.

This is UPF0301 protein BP0319 from Bordetella pertussis (strain Tohama I / ATCC BAA-589 / NCTC 13251).